Reading from the N-terminus, the 291-residue chain is tRNA U34 carboxymethyltransferase (291 aa).

Carboxy-S-adenosyl-L-methionine contacts are provided by residues Lys-61, Trp-75, Lys-80, Gly-100, 122–124 (DPS), 149–150 (VE), Tyr-169, and Arg-284.

This sequence belongs to the class I-like SAM-binding methyltransferase superfamily. CmoB family. Homotetramer.

The catalysed reaction is carboxy-S-adenosyl-L-methionine + 5-hydroxyuridine(34) in tRNA = 5-carboxymethoxyuridine(34) in tRNA + S-adenosyl-L-homocysteine + H(+). Functionally, catalyzes carboxymethyl transfer from carboxy-S-adenosyl-L-methionine (Cx-SAM) to 5-hydroxyuridine (ho5U) to form 5-carboxymethoxyuridine (cmo5U) at position 34 in tRNAs. This is tRNA U34 carboxymethyltransferase from Campylobacter jejuni subsp. jejuni serotype O:23/36 (strain 81-176).